A 413-amino-acid polypeptide reads, in one-letter code: Serine hydroxymethyltransferase (413 aa).

(6S)-5,6,7,8-tetrahydrofolate is bound by residues Leu115 and 119-121 (GHL). The residue at position 224 (Lys224) is an N6-(pyridoxal phosphate)lysine.

It belongs to the SHMT family. As to quaternary structure, homodimer. Requires pyridoxal 5'-phosphate as cofactor.

The protein resides in the cytoplasm. The enzyme catalyses (6R)-5,10-methylene-5,6,7,8-tetrahydrofolate + glycine + H2O = (6S)-5,6,7,8-tetrahydrofolate + L-serine. Its pathway is one-carbon metabolism; tetrahydrofolate interconversion. The protein operates within amino-acid biosynthesis; glycine biosynthesis; glycine from L-serine: step 1/1. Functionally, catalyzes the reversible interconversion of serine and glycine with tetrahydrofolate (THF) serving as the one-carbon carrier. This reaction serves as the major source of one-carbon groups required for the biosynthesis of purines, thymidylate, methionine, and other important biomolecules. Also exhibits THF-independent aldolase activity toward beta-hydroxyamino acids, producing glycine and aldehydes, via a retro-aldol mechanism. This is Serine hydroxymethyltransferase from Mycoplasma mycoides subsp. mycoides SC (strain CCUG 32753 / NCTC 10114 / PG1).